Consider the following 196-residue polypeptide: Metalloproteinase inhibitor 2 (196 aa).

The signal sequence occupies residues 1 to 2 (RA). Cys3 contacts Zn(2+). Involved in metalloproteinase-binding stretches follow at residues 3-6 (CSCS) and 71-72 (SA). Cystine bridges form between Cys3-Cys74, Cys5-Cys103, Cys15-Cys128, Cys130-Cys177, Cys135-Cys140, and Cys148-Cys169. Residues 3-128 (CSCSPVHPQQ…SLNHRYQMGC (126 aa)) form the NTR domain.

Belongs to the protease inhibitor I35 (TIMP) family. In terms of assembly, interacts (via the C-terminal) with MMP2 (via the C-terminal PEX domain); the interaction inhibits the MMP2 activity. In terms of processing, the activity of TIMP2 is dependent on the presence of disulfide bonds.

It localises to the secreted. Functionally, complexes with metalloproteinases (such as collagenases) and irreversibly inactivates them by binding to their catalytic zinc cofactor. In Cricetulus longicaudatus (Long-tailed dwarf hamster), this protein is Metalloproteinase inhibitor 2 (TIMP2).